We begin with the raw amino-acid sequence, 88 residues long: DASH complex subunit HSK3 (88 aa).

Low complexity predominate over residues 1-15; it reads MSSRGSGANAASRQS. A disordered region spans residues 1–24; sequence MSSRGSGANAASRQSMTASGGAVK.

It belongs to the DASH complex HSK3 family. As to quaternary structure, component of the DASH complex consisting of ASK1, DAD1, DAD2, DAD3, DAD4, DAM1, DUO1, HSK3, SPC19 and SPC34, with a stoichiometry of one copy of each subunit per complex. Multiple DASH complexes oligomerize to form a ring that encircles spindle microtubules and organizes the rod-like NDC80 complexes of the outer kinetochore. DASH complex oligomerization strengthens microtubule attachments. On cytoplasmic microtubules, DASH complexes appear to form patches instead of rings.

Its subcellular location is the nucleus. It is found in the cytoplasm. The protein resides in the cytoskeleton. It localises to the spindle. The protein localises to the chromosome. Its subcellular location is the centromere. It is found in the kinetochore. Component of the DASH complex that connects microtubules with kinetochores and couples microtubule depolymerisation to chromosome movement; it is involved in retrieving kinetochores to the spindle poles before their re-orientation on the spindle in early mitosis and allows microtubule depolymerization to pull chromosomes apart and resist detachment during anaphase. Kinetochores, consisting of a centromere-associated inner segment and a microtubule-contacting outer segment, play a crucial role in chromosome segregation by mediating the physical connection between centromeric DNA and microtubules. Kinetochores also serve as an input point for the spindle assembly checkpoint, which delays anaphase until all chromosomes have bioriented on the mitotic spindle. The chain is DASH complex subunit HSK3 from Chaetomium thermophilum (strain DSM 1495 / CBS 144.50 / IMI 039719) (Thermochaetoides thermophila).